The sequence spans 209 residues: Ubiquitin-conjugating enzyme E2 S (209 aa).

The 147-residue stretch at Gln-14 to Gln-160 folds into the UBC core domain. Cys-98 acts as the Glycyl thioester intermediate in catalysis. The segment at Ala-168 to Lys-194 is disordered. Positions Ala-184 to Lys-194 are enriched in basic and acidic residues.

This sequence belongs to the ubiquitin-conjugating enzyme family.

It catalyses the reaction S-ubiquitinyl-[E1 ubiquitin-activating enzyme]-L-cysteine + [E2 ubiquitin-conjugating enzyme]-L-cysteine = [E1 ubiquitin-activating enzyme]-L-cysteine + S-ubiquitinyl-[E2 ubiquitin-conjugating enzyme]-L-cysteine.. The protein operates within protein modification; protein ubiquitination. Its function is as follows. Catalyzes the covalent attachment of ubiquitin to other proteins. Acts as an essential factor of the anaphase promoting complex/cyclosome (APC/C), a cell cycle-regulated ubiquitin ligase that controls progression through mitosis. Acts by specifically elongating polyubiquitin chains initiated by the E2 enzyme vih/UbcH10 on APC/C substrates, enhancing the degradation of APC/C substrates by the proteasome and promoting mitotic exit. This Drosophila melanogaster (Fruit fly) protein is Ubiquitin-conjugating enzyme E2 S.